The sequence spans 307 residues: Myeloid-associated differentiation marker-like protein 2 (307 aa).

MARVEL domains lie at Ala17–Gly154 and Tyr159–Phe303. Helical transmembrane passes span Phe53–Phe73, Ala90–Phe110, Leu129–Thr149, Val163–Val183, Val198–Gly218, Ile232–Phe252, and Leu278–Ser298.

The protein belongs to the MAL family.

It is found in the membrane. This Mus musculus (Mouse) protein is Myeloid-associated differentiation marker-like protein 2 (Myadml2).